A 222-amino-acid chain; its full sequence is Probable RNA 2'-phosphotransferase (222 aa).

This sequence belongs to the KptA/TPT1 family.

Its function is as follows. Removes the 2'-phosphate from RNA via an intermediate in which the phosphate is ADP-ribosylated by NAD followed by a presumed transesterification to release the RNA and generate ADP-ribose 1''-2''-cyclic phosphate (APPR&gt;P). May function as an ADP-ribosylase. The chain is Probable RNA 2'-phosphotransferase from Haloarcula marismortui (strain ATCC 43049 / DSM 3752 / JCM 8966 / VKM B-1809) (Halobacterium marismortui).